A 109-amino-acid polypeptide reads, in one-letter code: Large ribosomal subunit protein uL24 (109 aa).

This sequence belongs to the universal ribosomal protein uL24 family. In terms of assembly, part of the 50S ribosomal subunit.

In terms of biological role, one of two assembly initiator proteins, it binds directly to the 5'-end of the 23S rRNA, where it nucleates assembly of the 50S subunit. Functionally, one of the proteins that surrounds the polypeptide exit tunnel on the outside of the subunit. The protein is Large ribosomal subunit protein uL24 of Mesoplasma florum (strain ATCC 33453 / NBRC 100688 / NCTC 11704 / L1) (Acholeplasma florum).